A 376-amino-acid polypeptide reads, in one-letter code: UDP-N-acetylglucosamine--N-acetylmuramyl-(pentapeptide) pyrophosphoryl-undecaprenol N-acetylglucosamine transferase (376 aa).

UDP-N-acetyl-alpha-D-glucosamine contacts are provided by residues 12 to 14 (TAG), asparagine 126, arginine 163, serine 198, and glutamine 296.

The protein belongs to the glycosyltransferase 28 family. MurG subfamily.

The protein resides in the cell membrane. The catalysed reaction is di-trans,octa-cis-undecaprenyl diphospho-N-acetyl-alpha-D-muramoyl-L-alanyl-D-glutamyl-meso-2,6-diaminopimeloyl-D-alanyl-D-alanine + UDP-N-acetyl-alpha-D-glucosamine = di-trans,octa-cis-undecaprenyl diphospho-[N-acetyl-alpha-D-glucosaminyl-(1-&gt;4)]-N-acetyl-alpha-D-muramoyl-L-alanyl-D-glutamyl-meso-2,6-diaminopimeloyl-D-alanyl-D-alanine + UDP + H(+). It functions in the pathway cell wall biogenesis; peptidoglycan biosynthesis. Its function is as follows. Cell wall formation. Catalyzes the transfer of a GlcNAc subunit on undecaprenyl-pyrophosphoryl-MurNAc-pentapeptide (lipid intermediate I) to form undecaprenyl-pyrophosphoryl-MurNAc-(pentapeptide)GlcNAc (lipid intermediate II). The protein is UDP-N-acetylglucosamine--N-acetylmuramyl-(pentapeptide) pyrophosphoryl-undecaprenol N-acetylglucosamine transferase of Frankia casuarinae (strain DSM 45818 / CECT 9043 / HFP020203 / CcI3).